The primary structure comprises 571 residues: Proline--tRNA ligase (571 aa).

It belongs to the class-II aminoacyl-tRNA synthetase family. ProS type 1 subfamily. In terms of assembly, homodimer.

It localises to the cytoplasm. The enzyme catalyses tRNA(Pro) + L-proline + ATP = L-prolyl-tRNA(Pro) + AMP + diphosphate. In terms of biological role, catalyzes the attachment of proline to tRNA(Pro) in a two-step reaction: proline is first activated by ATP to form Pro-AMP and then transferred to the acceptor end of tRNA(Pro). As ProRS can inadvertently accommodate and process non-cognate amino acids such as alanine and cysteine, to avoid such errors it has two additional distinct editing activities against alanine. One activity is designated as 'pretransfer' editing and involves the tRNA(Pro)-independent hydrolysis of activated Ala-AMP. The other activity is designated 'posttransfer' editing and involves deacylation of mischarged Ala-tRNA(Pro). The misacylated Cys-tRNA(Pro) is not edited by ProRS. In Vibrio vulnificus (strain YJ016), this protein is Proline--tRNA ligase.